Consider the following 620-residue polypeptide: MAU2 chromatid cohesion factor homolog (620 aa).

TPR repeat units lie at residues 90 to 123 (FDTASLLAQLYQQQEQSSLAKPVLRKAIELSQHN), 445 to 478 (GSFYYVQGLNAFHKSSFHEAKRFLRETLKMANAE), and 485 to 518 (SCSLVLLSHVFLSIGNSKESMNMVTPAMQLASKI).

It belongs to the SCC4/mau-2 family. As to quaternary structure, component of the cohesin loading complex.

It is found in the nucleus. The protein resides in the nucleoplasm. Its function is as follows. Required for association of the cohesin complex with chromatin during interphase. Plays a role in sister chromatid cohesion and normal progression through prometaphase. In Aedes aegypti (Yellowfever mosquito), this protein is MAU2 chromatid cohesion factor homolog.